Here is a 192-residue protein sequence, read N- to C-terminus: Putative metal-sulfur cluster biosynthesis proteins YuaD (192 aa).

Positions 15–179 constitute an MOSC domain; the sequence is ADTKSFVTKQ…VYTGDEIEVH (165 aa).

The sequence is that of Putative metal-sulfur cluster biosynthesis proteins YuaD (yuaD) from Bacillus subtilis (strain 168).